The chain runs to 273 residues: Proteasome subunit beta type-10 (273 aa).

Met-1 is subject to N-acetylmethionine. The propeptide at 1–39 (MLKQAVEPTGGFSFENCQRNASLEHVLPGLRVPHARKTG) is removed in mature form. Thr-40 (nucleophile) is an active-site residue.

It belongs to the peptidase T1B family. The 26S proteasome consists of a 20S proteasome core and two 19S regulatory subunits. The 20S proteasome core is composed of 28 subunits that are arranged in four stacked rings, resulting in a barrel-shaped structure. The two end rings are each formed by seven alpha subunits, and the two central rings are each formed by seven beta subunits. The catalytic chamber with the active sites is on the inside of the barrel. Component of the immunoproteasome, where it displaces the equivalent housekeeping subunit PSMB7. Component of the spermatoproteasome, a form of the proteasome specifically found in testis. Autocleaved. The resulting N-terminal Thr residue of the mature subunit is responsible for the nucleophile proteolytic activity. Detected in liver (at protein level).

The protein localises to the cytoplasm. The protein resides in the nucleus. It carries out the reaction Cleavage of peptide bonds with very broad specificity.. In terms of biological role, the proteasome is a multicatalytic proteinase complex which is characterized by its ability to cleave peptides with Arg, Phe, Tyr, Leu, and Glu adjacent to the leaving group at neutral or slightly basic pH. The proteasome has an ATP-dependent proteolytic activity. This subunit is involved in antigen processing to generate class I binding peptides. Plays a role in determining the T-cell repertoire for an antiviral T-cell response. The polypeptide is Proteasome subunit beta type-10 (Psmb10) (Mus musculus (Mouse)).